Here is a 247-residue protein sequence, read N- to C-terminus: Hydroxyacylglutathione hydrolase 1 (247 aa).

Positions 54, 56, 58, 59, 111, 128, and 165 each coordinate Zn(2+).

The protein belongs to the metallo-beta-lactamase superfamily. Glyoxalase II family. In terms of assembly, monomer. Zn(2+) is required as a cofactor.

The enzyme catalyses an S-(2-hydroxyacyl)glutathione + H2O = a 2-hydroxy carboxylate + glutathione + H(+). It participates in secondary metabolite metabolism; methylglyoxal degradation; (R)-lactate from methylglyoxal: step 2/2. Thiolesterase that catalyzes the hydrolysis of S-D-lactoyl-glutathione to form glutathione and D-lactic acid. In Vibrio vulnificus (strain YJ016), this protein is Hydroxyacylglutathione hydrolase 1.